A 1095-amino-acid chain; its full sequence is 1-phosphatidylinositol 4,5-bisphosphate phosphodiesterase (1095 aa).

Residues 319 to 469 (MEMDQPLAHY…LKRKILIKNK (151 aa)) enclose the PI-PLC X-box domain. Active-site residues include His334 and His381. Residues Lys467 and Lys469 each coordinate substrate. The interval 487–529 (ELKTDDDPEEDASAGKPPEAAAAPAPAPEAAAAAEGAAEGGGG) is disordered. Residues 500-523 (AGKPPEAAAAPAPAPEAAAAAEGA) show a composition bias toward low complexity. A PI-PLC Y-box domain is found at 550–666 (LSSMVNYAQP…GYLLKPDFMR (117 aa)). 2 residues coordinate substrate: Ser579 and Arg606. The region spanning 666–794 (RRADKDFDPF…SLRTEANFPM (129 aa)) is the C2 domain. Disordered regions lie at residues 842 to 863 (IEEQSGGAARDAGKAKEEEKKE) and 1000 to 1030 (QAKMSADTAKEVQNDKTLKTKNEKDRRLREK). 2 stretches are compositionally biased toward basic and acidic residues: residues 852 to 863 (DAGKAKEEEKKE) and 1007 to 1030 (TAKEVQNDKTLKTKNEKDRRLREK).

As to quaternary structure, interacts with inaD. Abundantly expressed in the adult retina.

The enzyme catalyses a 1,2-diacyl-sn-glycero-3-phospho-(1D-myo-inositol-4,5-bisphosphate) + H2O = 1D-myo-inositol 1,4,5-trisphosphate + a 1,2-diacyl-sn-glycerol + H(+). Its function is as follows. The production of the second messenger molecules diacylglycerol (DAG) and inositol 1,4,5-trisphosphate (IP3) is mediated by activated phosphatidylinositol-specific phospholipase C enzymes. Essential component of the phototransduction pathway. Essential downstream component of a hh-signaling pathway which regulates the Duox-dependent gut immune response to bacterial uracil; required for the activation of Cad99C and consequently Cad99C-dependent endosome formation, which is essential for the Duox-dependent production of reactive oxygen species (ROS) in response to intestinal bacterial infection. In Drosophila melanogaster (Fruit fly), this protein is 1-phosphatidylinositol 4,5-bisphosphate phosphodiesterase.